A 269-amino-acid chain; its full sequence is Proline-rich protein 7 (269 aa).

The Extracellular portion of the chain corresponds to 1–9 (MVMSQGTYT). A required for interaction with NMDA receptors region spans residues 1-44 (MVMSQGTYTFLTCFAGFWLIWGLIVLLCCFCSFLRRRLKRRQEE). The segment at 2–39 (VMSQGTYTFLTCFAGFWLIWGLIVLLCCFCSFLRRRLK) is required for membrane localization. Residues 10–30 (FLTCFAGFWLIWGLIVLLCCF) traverse the membrane as a helical; Signal-anchor for type III membrane protein segment. The Cytoplasmic segment spans residues 31-269 (CSFLRRRLKR…IPLFGRTTAV (239 aa)). Disordered regions lie at residues 63–83 (GSLA…RSRL) and 97–121 (PLLH…PHPP). S64 bears the Phosphoserine mark. Positions 108–117 (AHPHPHHHAL) are enriched in basic residues. The segment at 146–166 (PCYEEAVLMAEPPPPYSEVLT) is required for internalization. Residues 146-269 (PCYEEAVLMA…IPLFGRTTAV (124 aa)) are required for apoptosis induction. Residues 267-269 (TAV) carry the PDZ-binding motif.

As to quaternary structure, forms a complex with NMDA receptor zeta subunit GRIN1 and epsilon subunit GRIN2B. Interacts with GRIN2B. Interacts with GRIN1; the interaction is reduced upon NMDA receptor activity. Found in a postsynaptic membrane complex with DLG4 and GRIN1. Interacts with DLG4 (via PDZ3 domain and to lesser degree via PDZ2 domain). Interacts with JUN. Found in a complex with JUN and FBXW7. Interacts with JUN and FBXW7; the interaction inhibits ubiquitination-mediated JUN degradation promoting its phosphorylation and transcriptional activity. Interacts with SRC. In terms of processing, palmitoylated. Post-translationally, tyrosine phosphorylated, possibly by SRC. In terms of tissue distribution, highly expressed in brain, moderately expressed in lymph nodes and T cells and low expression in thymus and spleen. Expressed in single positive progenitor thymocytes, particularly in CD8 single positive thymocytes.

It localises to the cell membrane. It is found in the postsynaptic cell membrane. Its subcellular location is the postsynaptic density membrane. The protein resides in the cytoplasm. The protein localises to the perinuclear region. It localises to the synapse. It is found in the cell projection. Its subcellular location is the dendrite. The protein resides in the nucleus. Its function is as follows. Acts as a synapse-to-nucleus messenger to promote NMDA receptor-mediated excitotoxicity in neurons in a JUN-dependent manner. Inhibits ubiquitination-mediated degradation and promotes phosphorylation and transcriptional activity of transcription factor JUN. Might play a redundant role in the regulation of T cell receptor signaling. Might promote apoptosis in T cells. This Mus musculus (Mouse) protein is Proline-rich protein 7 (Prr7).